A 121-amino-acid polypeptide reads, in one-letter code: Perlustrin-like protein (121 aa).

The signal sequence occupies residues 1 to 23 (MKFGVGFLLSCLVALNTVQNMLA). The IGFBP N-terminal domain maps to 24–104 (LSCLPCDFDT…FDFKGTCQES (81 aa)). 6 cysteine pairs are disulfide-bonded: cysteine 26/cysteine 52, cysteine 29/cysteine 54, cysteine 36/cysteine 55, cysteine 45/cysteine 58, cysteine 66/cysteine 79, and cysteine 73/cysteine 101. N-linked (GlcNAc...) asparagine glycans are attached at residues asparagine 68, asparagine 81, and asparagine 117.

As to expression, component of the acid-insoluble organic matrix of calcified layers of the shell (at protein level).

The protein resides in the secreted. The chain is Perlustrin-like protein from Lottia gigantea (Giant owl limpet).